The chain runs to 974 residues: MVTTYIKSDLQLDGRQFFQPKDNLKMAELFMECEEEELEPWQKKVKEVEEDDDDEPIFVAEIASSKPAISNILNRVNPSSHSRGIKNGILNRGFTASFKPTSQRCLNSASNPVAALPVNFHPESRSSDSSVIVQPFSKPGYVTNSPRVLSNNSSELLFDLTQDTGLSHYQGGPTLSIAGLNETSFLSKRPSGSDISSVNPKKPKPSENTSGIDASSVISSEKSPSVISLQVVPSQGANCSSSQSKNGTTFPRACPKCDIHFNLLDPLKNHMTYCCPDMINNFLGLTKADNLNSANEAKTLESEKGKLIMLVNDFYYGKHEGDVLEEQKTHTTFKCFSCLKVLKNNIRFMNHMKHHLELEKQSSESWEKHTTCQHCYRQFPTPFQLQCHIESTHTPHEFSTICKICELSFETEQILLQHMKDNHKPGEMPYICQVCNYRSSLFSEVESHFRTSHENTKNLLCPFCLKVIKIATPYMHHYMKHQKKGIHRCTKCRLQFLTCKEKMDHKTQHHRTFVKPKQLEGLPPGTKVTIRASVGPLQSGSSVTPSISPSTSTLQLSPPEPDNVTAKNHVKLTTSTPNTTISDPSKANETKSNGSKSKNKSKVSNMQKKQSTLSSSNKKSKVNTALRNLRLRRGVHECIECSSEVKDFANHFPTYVHCSFCRYNTSCSKAYVNHMMSFHSNRPSKRYCIFKKHSENLRGISLVCLNCDFLTDVSGLDNMATHLSQHETHSCRVLVEQVSVCIPTSERLSEIKTEAPTKGQEPVSKETARHSRAEGEPGASHSGSKQDKVPSSEEGTGCDASVCEAAAATHCEKDVTVSDTENVSSSKNILSHDPDVGTDTMEKEEKTHHACQEMELKVDQSSESTNPTEAELSSETRQGLQLTSGDVGIDQFLRQGDEPKSVNSDASDPGSVRLEPLTPSEVLEYEATEILHDGDDPSANTSDTVSDQTGGSPGGSNPCRAETAVDLADGEERS.

Residues Lys44, Lys46, Lys86, Lys99, Lys138, Lys201, Lys222, Lys245, Lys287, and Lys304 each participate in a glycyl lysine isopeptide (Lys-Gly) (interchain with G-Cter in SUMO2) cross-link. The interval 188–216 (KRPSGSDISSVNPKKPKPSENTSGIDASS) is disordered. 2 consecutive C2H2-type zinc fingers follow at residues 333–355 (FKCF…MKHH) and 370–393 (TTCQ…ESTH). The segment at 400–424 (TICKICELSFETEQILLQHMKDNHK) adopts a C2H2-type 3; degenerate zinc-finger fold. 2 consecutive C2H2-type zinc fingers follow at residues 430-453 (YICQ…RTSH) and 459-481 (LLCP…YMKH). Disordered stretches follow at residues 507–624 (TQHH…KVNT), 751–797 (IKTE…EGTG), and 815–974 (VTVS…EERS). The segment covering 539–557 (SGSSVTPSISPSTSTLQLS) has biased composition (low complexity). Ser557 carries the post-translational modification Phosphoserine. The span at 571 to 587 (KLTTSTPNTTISDPSKA) shows a compositional bias: polar residues. A compositionally biased stretch (low complexity) spans 591–611 (KSNGSKSKNKSKVSNMQKKQS). A compositionally biased stretch (polar residues) spans 612–624 (TLSSSNKKSKVNT). Lys752 is covalently cross-linked (Glycyl lysine isopeptide (Lys-Gly) (interchain with G-Cter in SUMO2)). Positions 763–775 (VSKETARHSRAEG) are enriched in basic and acidic residues. Over residues 817 to 829 (VSDTENVSSSKNI) the composition is skewed to polar residues. Positions 830 to 860 (LSHDPDVGTDTMEKEEKTHHACQEMELKVDQ) are enriched in basic and acidic residues. Positions 861–884 (SSESTNPTEAELSSETRQGLQLTS) are enriched in polar residues. Phosphoserine is present on residues Ser904 and Ser907. Residues 938 to 950 (SANTSDTVSDQTG) show a composition bias toward polar residues.

It is found in the nucleus. Functionally, may function as a transcription factor. In Mus musculus (Mouse), this protein is Zinc finger protein 280D (Znf280d).